The sequence spans 328 residues: Formimidoylglutamase (328 aa).

Residues histidine 133, aspartate 159, histidine 161, aspartate 163, aspartate 253, and aspartate 255 each contribute to the Mn(2+) site.

Belongs to the arginase family. Mn(2+) serves as cofactor.

It catalyses the reaction N-formimidoyl-L-glutamate + H2O = formamide + L-glutamate. It participates in amino-acid degradation; L-histidine degradation into L-glutamate; L-glutamate from N-formimidoyl-L-glutamate (hydrolase route): step 1/1. Functionally, catalyzes the conversion of N-formimidoyl-L-glutamate to L-glutamate and formamide. This is Formimidoylglutamase from Streptococcus pyogenes serotype M6 (strain ATCC BAA-946 / MGAS10394).